Reading from the N-terminus, the 411-residue chain is Bestrophin homolog 26 (411 aa).

Helical transmembrane passes span 30 to 50 (FTAI…FMVI), 73 to 93 (SHQE…SSVV), 235 to 255 (IPIP…YFAV), and 272 to 292 (TWIT…MGWM).

It belongs to the anion channel-forming bestrophin (TC 1.A.46) family. Calcium-sensitive chloride channel subfamily. In terms of assembly, forms oligomers.

The protein localises to the cell membrane. Its function is as follows. Forms chloride channels. The polypeptide is Bestrophin homolog 26 (best-26) (Caenorhabditis elegans).